The chain runs to 253 residues: Indole-3-glycerol phosphate synthase (253 aa).

The protein belongs to the TrpC family.

It carries out the reaction 1-(2-carboxyphenylamino)-1-deoxy-D-ribulose 5-phosphate + H(+) = (1S,2R)-1-C-(indol-3-yl)glycerol 3-phosphate + CO2 + H2O. It participates in amino-acid biosynthesis; L-tryptophan biosynthesis; L-tryptophan from chorismate: step 4/5. The chain is Indole-3-glycerol phosphate synthase from Exiguobacterium sp. (strain ATCC BAA-1283 / AT1b).